We begin with the raw amino-acid sequence, 328 residues long: Phosphate acyltransferase (328 aa).

This sequence belongs to the PlsX family. Homodimer. Probably interacts with PlsY.

It localises to the cytoplasm. The enzyme catalyses a fatty acyl-[ACP] + phosphate = an acyl phosphate + holo-[ACP]. It functions in the pathway lipid metabolism; phospholipid metabolism. Functionally, catalyzes the reversible formation of acyl-phosphate (acyl-PO(4)) from acyl-[acyl-carrier-protein] (acyl-ACP). This enzyme utilizes acyl-ACP as fatty acyl donor, but not acyl-CoA. This is Phosphate acyltransferase from Mycoplasmoides gallisepticum (strain R(low / passage 15 / clone 2)) (Mycoplasma gallisepticum).